A 99-amino-acid chain; its full sequence is Acylphosphatase-2 (99 aa).

S2 carries the N-acetylserine modification. One can recognise an Acylphosphatase-like domain in the interval 9–99 (SVDYEVFGRV…LEYSNFSIRY (91 aa)). Catalysis depends on residues R24 and N42. Residue S93 is modified to Phosphoserine.

This sequence belongs to the acylphosphatase family.

It catalyses the reaction an acyl phosphate + H2O = a carboxylate + phosphate + H(+). Its function is as follows. Its physiological role is not yet clear. This chain is Acylphosphatase-2 (ACYP2), found in Cavia porcellus (Guinea pig).